The sequence spans 223 residues: Small ribosomal subunit protein uS3 (223 aa).

A KH type-2 domain is found at 39–107 (IRQFLRKKPS…EVWLEIAEIK (69 aa)).

The protein belongs to the universal ribosomal protein uS3 family. Part of the 30S ribosomal subunit. Forms a tight complex with proteins S10 and S14.

Its function is as follows. Binds the lower part of the 30S subunit head. Binds mRNA in the 70S ribosome, positioning it for translation. The sequence is that of Small ribosomal subunit protein uS3 from Chlamydia pneumoniae (Chlamydophila pneumoniae).